Reading from the N-terminus, the 582-residue chain is Probable DNA ligase (582 aa).

Position 243 (glutamate 243) interacts with ATP. Residue lysine 245 is the N6-AMP-lysine intermediate of the active site. 6 residues coordinate ATP: arginine 250, arginine 265, glutamate 295, phenylalanine 335, arginine 410, and lysine 416.

The protein belongs to the ATP-dependent DNA ligase family. Mg(2+) is required as a cofactor.

The enzyme catalyses ATP + (deoxyribonucleotide)n-3'-hydroxyl + 5'-phospho-(deoxyribonucleotide)m = (deoxyribonucleotide)n+m + AMP + diphosphate.. Functionally, DNA ligase that seals nicks in double-stranded DNA during DNA replication, DNA recombination and DNA repair. The sequence is that of Probable DNA ligase from Dictyoglomus turgidum (strain DSM 6724 / Z-1310).